Reading from the N-terminus, the 293-residue chain is ELMO domain-containing protein 2 (293 aa).

The 157-residue stretch at 126–282 (QHEKLLIKLW…KFHEKIKGLL (157 aa)) folds into the ELMO domain.

Acts as a GTPase-activating protein (GAP) toward guanine nucleotide exchange factors like ARL2, ARL3, ARF1 and ARF6, but not for GTPases outside the Arf family. This is ELMO domain-containing protein 2 (ELMOD2) from Bos taurus (Bovine).